The sequence spans 160 residues: MIKNKKKKSYTSVYALGQYISMSAHKARRVIDQIRGRSYEEALMILELMPYRGCYPIFKLVYSAAANASHNKGLKETNLVISKAEVNQGNTVKKLKPRARGRSYPIKRSTCHITIVLEDTSLYQQYDEYLMYFKKPGCSNENKNLTCYDTYSSGGLWDKK.

Belongs to the universal ribosomal protein uL22 family. As to quaternary structure, part of the 50S ribosomal subunit.

It localises to the plastid. The protein localises to the chloroplast. In terms of biological role, this protein binds specifically to 23S rRNA. The globular domain of the protein is located near the polypeptide exit tunnel on the outside of the subunit, while an extended beta-hairpin is found that lines the wall of the exit tunnel in the center of the 70S ribosome. The polypeptide is Large ribosomal subunit protein uL22c (rpl22) (Draba nemorosa (Woodland whitlowgrass)).